A 77-amino-acid polypeptide reads, in one-letter code: ATP synthase subunit c (77 aa).

2 helical membrane passes run 13 to 33 (IATV…GIVA) and 55 to 75 (FLGI…YFIF).

The protein belongs to the ATPase C chain family. In terms of assembly, F-type ATPases have 2 components, F(1) - the catalytic core - and F(0) - the membrane proton channel. F(1) has five subunits: alpha(3), beta(3), gamma(1), delta(1), epsilon(1). F(0) has three main subunits: a(1), b(2) and c(10-14). The alpha and beta chains form an alternating ring which encloses part of the gamma chain. F(1) is attached to F(0) by a central stalk formed by the gamma and epsilon chains, while a peripheral stalk is formed by the delta and b chains.

It localises to the cell membrane. In terms of biological role, f(1)F(0) ATP synthase produces ATP from ADP in the presence of a proton or sodium gradient. F-type ATPases consist of two structural domains, F(1) containing the extramembraneous catalytic core and F(0) containing the membrane proton channel, linked together by a central stalk and a peripheral stalk. During catalysis, ATP synthesis in the catalytic domain of F(1) is coupled via a rotary mechanism of the central stalk subunits to proton translocation. Its function is as follows. Key component of the F(0) channel; it plays a direct role in translocation across the membrane. A homomeric c-ring of between 10-14 subunits forms the central stalk rotor element with the F(1) delta and epsilon subunits. The sequence is that of ATP synthase subunit c from Clavibacter michiganensis subsp. michiganensis (strain NCPPB 382).